The primary structure comprises 318 residues: Glutathione synthetase (318 aa).

The ATP-grasp domain occupies 125–311; sequence EKLFTAWFPE…ITGKLMDAIE (187 aa). Residue 151 to 208 coordinates ATP; sequence FRQEHGDIILKPLDGMGGASIFRVKENDPNVSVIIETLTNHGQNYAMAQTFVPDISNG. Mg(2+) is bound by residues Glu-282 and Asn-284.

Belongs to the prokaryotic GSH synthase family. Mg(2+) serves as cofactor. The cofactor is Mn(2+).

It carries out the reaction gamma-L-glutamyl-L-cysteine + glycine + ATP = glutathione + ADP + phosphate + H(+). Its pathway is sulfur metabolism; glutathione biosynthesis; glutathione from L-cysteine and L-glutamate: step 2/2. The polypeptide is Glutathione synthetase (Vibrio vulnificus (strain YJ016)).